The primary structure comprises 533 residues: Non-specific phospholipase C1 (533 aa).

The N-terminal stretch at 1–22 is a signal peptide; the sequence is MAFRRVLTTVILFCYLLISSQS.

Belongs to the bacterial phospholipase C family. In terms of tissue distribution, expressed in roots, leaves, stems, flowers and siliques.

Its subcellular location is the secreted. This chain is Non-specific phospholipase C1 (NPC1), found in Arabidopsis thaliana (Mouse-ear cress).